The primary structure comprises 372 residues: Glutamate 5-kinase (372 aa).

K9 is an ATP binding site. Residues S49, D136, and N148 each contribute to the substrate site. ATP is bound by residues 168-169 (TD) and 210-216 (TGGMKSK). The PUA domain occupies 276–353 (AGSIEIDSGA…EEALSLTKRS (78 aa)).

The protein belongs to the glutamate 5-kinase family.

The protein localises to the cytoplasm. The catalysed reaction is L-glutamate + ATP = L-glutamyl 5-phosphate + ADP. The protein operates within amino-acid biosynthesis; L-proline biosynthesis; L-glutamate 5-semialdehyde from L-glutamate: step 1/2. Catalyzes the transfer of a phosphate group to glutamate to form L-glutamate 5-phosphate. The protein is Glutamate 5-kinase of Shouchella clausii (strain KSM-K16) (Alkalihalobacillus clausii).